Reading from the N-terminus, the 28-residue chain is uncharacterized protein (28 aa).

This is an uncharacterized protein from Escherichia coli (Bacteriophage T4).